The chain runs to 124 residues: Small ribosomal subunit protein uS12 (124 aa).

Aspartate 89 carries the 3-methylthioaspartic acid modification.

It belongs to the universal ribosomal protein uS12 family. Part of the 30S ribosomal subunit. Contacts proteins S8 and S17. May interact with IF1 in the 30S initiation complex.

With S4 and S5 plays an important role in translational accuracy. Functionally, interacts with and stabilizes bases of the 16S rRNA that are involved in tRNA selection in the A site and with the mRNA backbone. Located at the interface of the 30S and 50S subunits, it traverses the body of the 30S subunit contacting proteins on the other side and probably holding the rRNA structure together. The combined cluster of proteins S8, S12 and S17 appears to hold together the shoulder and platform of the 30S subunit. The polypeptide is Small ribosomal subunit protein uS12 (Prochlorococcus marinus (strain SARG / CCMP1375 / SS120)).